Here is a 350-residue protein sequence, read N- to C-terminus: D-alanine--D-alanine ligase (350 aa).

One can recognise an ATP-grasp domain in the interval 133-334 (NDIFELNKIP…VSEVFDNLIG (202 aa)). 161 to 216 (FEKTSKAVYVKPCNAGSSVGVMRAETEEELEKAIQNAFQYDRRILVEEEIIGPELQ) provides a ligand contact to ATP. Residues aspartate 288, glutamate 300, and asparagine 302 each coordinate Mg(2+).

Belongs to the D-alanine--D-alanine ligase family. The cofactor is Mg(2+). It depends on Mn(2+) as a cofactor.

The protein localises to the cytoplasm. The enzyme catalyses 2 D-alanine + ATP = D-alanyl-D-alanine + ADP + phosphate + H(+). It functions in the pathway cell wall biogenesis; peptidoglycan biosynthesis. Functionally, cell wall formation. The chain is D-alanine--D-alanine ligase from Finegoldia magna (strain ATCC 29328 / DSM 20472 / WAL 2508) (Peptostreptococcus magnus).